A 797-amino-acid chain; its full sequence is Protocadherin beta-11 (797 aa).

The N-terminal stretch at 1 to 26 (MENQGTRTQQIRQVLLLFVLLGMSQA) is a signal peptide. Residues 27–690 (GSETWSFSVA…AQADSLTVYL (664 aa)) are Extracellular-facing. Cadherin domains follow at residues 35-133 (VAEE…SPIF), 138-242 (MLLE…SPEF), 247-347 (YEVK…APEI), 352-451 (ITSP…APTF), and 456-561 (YTLF…SPFV). Residues N418, N436, N487, and N567 are each glycosylated (N-linked (GlcNAc...) asparagine). The 104-residue stretch at 568–671 (GSAPCTELVP…LVDGFSQPYL (104 aa)) folds into the Cadherin 6 domain. A helical membrane pass occupies residues 691–711 (VVALASVSSLFLFSVLLFVAV). The Cytoplasmic segment spans residues 712–797 (RLCRRSRAAS…TFRNSFGFNF (86 aa)).

Its subcellular location is the cell membrane. Functionally, potential calcium-dependent cell-adhesion protein. May be involved in the establishment and maintenance of specific neuronal connections in the brain. The chain is Protocadherin beta-11 (PCDHB11) from Homo sapiens (Human).